Here is a 468-residue protein sequence, read N- to C-terminus: Argininosuccinate lyase (468 aa).

It belongs to the lyase 1 family. Argininosuccinate lyase subfamily.

The protein localises to the cytoplasm. The enzyme catalyses 2-(N(omega)-L-arginino)succinate = fumarate + L-arginine. It participates in amino-acid biosynthesis; L-arginine biosynthesis; L-arginine from L-ornithine and carbamoyl phosphate: step 3/3. This is Argininosuccinate lyase from Sphingopyxis alaskensis (strain DSM 13593 / LMG 18877 / RB2256) (Sphingomonas alaskensis).